We begin with the raw amino-acid sequence, 454 residues long: COBRA-like protein 6 (454 aa).

Residues 1 to 24 (MGAMLNLLLVVTVILCSILSPTRF) form the signal peptide. 5 N-linked (GlcNAc...) asparagine glycosylation sites follow: asparagine 104, asparagine 191, asparagine 320, asparagine 355, and asparagine 391. Residue serine 429 is the site of GPI-anchor amidated serine attachment. The propeptide at 430 to 454 (SSSSAVISSVSVVFCFLLHHLLLLV) is removed in mature form.

This sequence belongs to the COBRA family. Expressed in flowers and siliques.

The protein localises to the cell membrane. This is COBRA-like protein 6 (COBL6) from Arabidopsis thaliana (Mouse-ear cress).